The sequence spans 311 residues: Cytochrome f (311 aa).

A signal peptide spans 1 to 27; sequence MRRHLSLVLGSLVIGLALLIAPGASWA. Heme-binding residues include Tyr-28, Cys-48, Cys-51, and His-52. Residues 277 to 297 traverse the membrane as a helical segment; it reads IYGLLAFFAAVAIAQIMLVLK.

Belongs to the cytochrome f family. In terms of assembly, the 4 large subunits of the cytochrome b6-f complex are cytochrome b6, subunit IV (17 kDa polypeptide, PetD), cytochrome f and the Rieske protein, while the 4 small subunits are PetG, PetL, PetM and PetN. The complex functions as a dimer. Heme is required as a cofactor.

The protein localises to the cellular thylakoid membrane. Component of the cytochrome b6-f complex, which mediates electron transfer between photosystem II (PSII) and photosystem I (PSI), cyclic electron flow around PSI, and state transitions. This chain is Cytochrome f, found in Synechococcus sp. (strain CC9902).